A 196-amino-acid chain; its full sequence is uncharacterized protein (196 aa).

A helical membrane pass occupies residues 20–40; it reads GALALGCIALLLMGIVGCTTV.

The protein resides in the membrane. This is an uncharacterized protein from Mycobacterium tuberculosis (strain CDC 1551 / Oshkosh).